A 107-amino-acid chain; its full sequence is uncharacterized protein (107 aa).

This is an uncharacterized protein from Saccharomyces cerevisiae (strain ATCC 204508 / S288c) (Baker's yeast).